The primary structure comprises 347 residues: DNA-directed RNA polymerase subunit alpha (347 aa).

Positions 1-226 (MLISQRPTLS…ELFGLARELN (226 aa)) are alpha N-terminal domain (alpha-NTD). The alpha C-terminal domain (alpha-CTD) stretch occupies residues 243-347 (HIASFALPID…SQDYAETEQL (105 aa)). The interval 326-347 (TTGTWSTDGAYDSQDYAETEQL) is disordered.

It belongs to the RNA polymerase alpha chain family. As to quaternary structure, homodimer. The RNAP catalytic core consists of 2 alpha, 1 beta, 1 beta' and 1 omega subunit. When a sigma factor is associated with the core the holoenzyme is formed, which can initiate transcription.

It catalyses the reaction RNA(n) + a ribonucleoside 5'-triphosphate = RNA(n+1) + diphosphate. In terms of biological role, DNA-dependent RNA polymerase catalyzes the transcription of DNA into RNA using the four ribonucleoside triphosphates as substrates. This Mycobacterium leprae (strain TN) protein is DNA-directed RNA polymerase subunit alpha.